Here is a 385-residue protein sequence, read N- to C-terminus: Deoxyguanosinetriphosphate triphosphohydrolase-like protein (385 aa).

The HD domain maps to 75 to 204; the sequence is RLTHSLEVAQ…INFADEIAYN (130 aa).

The protein belongs to the dGTPase family. Type 2 subfamily.

The protein is Deoxyguanosinetriphosphate triphosphohydrolase-like protein of Geobacter sulfurreducens (strain ATCC 51573 / DSM 12127 / PCA).